Reading from the N-terminus, the 256-residue chain is Zinc metalloprotease (256 aa).

Catalysis depends on H74, which acts as the Proton donor.

Belongs to the peptidase M4 family. Zn(2+) serves as cofactor.

It is found in the secreted. In terms of biological role, may play a role in ulcer formation. Proteolytic digestion of gastric mucus has been suggested as an important mechanism by which its pathogenicity is at least partly exerted. In Helicobacter pylori (Campylobacter pylori), this protein is Zinc metalloprotease (hap).